The following is a 336-amino-acid chain: Methionine synthase (336 aa).

Residues His210, Cys212, Glu234, and Cys294 each coordinate Zn(2+).

The protein belongs to the archaeal MetE family. Zn(2+) is required as a cofactor.

The protein operates within amino-acid biosynthesis; L-methionine biosynthesis via de novo pathway. Functionally, catalyzes the transfer of a methyl group to L-homocysteine resulting in methionine formation. The physiological methyl donor is unknown. The sequence is that of Methionine synthase from Thermococcus kodakarensis (strain ATCC BAA-918 / JCM 12380 / KOD1) (Pyrococcus kodakaraensis (strain KOD1)).